The following is a 153-amino-acid chain: UPF0311 protein Rpal_1987 (153 aa).

Belongs to the UPF0311 family.

The polypeptide is UPF0311 protein Rpal_1987 (Rhodopseudomonas palustris (strain TIE-1)).